Consider the following 449-residue polypeptide: Plasmepsin IV (449 aa).

Over 1 to 37 (MALTVKEEEFSNTLIKNASAFDRLKLGNLKNLKIQKK) the chain is Cytoplasmic. The propeptide occupies 1–121 (MALTVKEEEF…SGYAQKGYLG (121 aa)). A helical; Signal-anchor for type II membrane protein transmembrane segment spans residues 38–58 (LQFLYLILFVLITGVFFFFLI). Topologically, residues 59 to 449 (GNFYSHRKLY…SVGFAVAKNL (391 aa)) are lumenal. A Peptidase A1 domain is found at 137 to 444 (FYGEGQIGTN…DYEKESVGFA (308 aa)). D155 is a catalytic residue. A disulfide bridge links C168 with C173. D335 is an active-site residue. A disulfide bond links C370 and C406.

It belongs to the peptidase A1 family. Component of the hemozoin formation complex (HFC) composed of falcipains FP2A and/or FP2B, plasmepsins PMII, PMIII/HAP and PMIV, heme detoxifying protein HDP and falcilysin FLN. The HFC complex is involved in hemoglobin degradation and detoxification of heme in the food vacuole during the asexual blood stage. Proteolytically cleaved into the soluble active mature form by cysteine proteases in the digestive vacuole of trophozoites. Proteolysis requires an acidic environment. Autoprocessing or transprocessing by other plasmepsins such as PMII may serve as an alternate activation system.

It localises to the membrane. Its subcellular location is the vacuole lumen. The enzyme catalyses Hydrolysis of the bonds linking certain hydrophobic residues in hemoglobin or globin. Also cleaves small molecules substrates such as Ala-Leu-Glu-Arg-Thr-Phe-|-Phe(NO2)-Ser-Phe-Pro-Thr.. With respect to regulation, inhibited by KNI derived compounds KNI-10333 and to a lesser extent KNI-10743. In terms of biological role, during the asexual blood stage, catalyzes the cleavage of denatured host hemoglobin (Hb). Digestion of host Hb is an essential step which provides the parasite with amino acids for protein synthesis, and regulates osmolarity. This Plasmodium falciparum (isolate 3D7) protein is Plasmepsin IV.